The primary structure comprises 229 residues: Potassium/proton antiporter CemA (229 aa).

3 helical membrane-spanning segments follow: residues 7–27 (FTPLFYLASIVFLPWWISFSV), 107–127 (ILHFSTNIICFIILSGYSILG), and 189–209 (IISGLVSTFPVILDTIFKYWI).

Belongs to the CemA family.

It is found in the plastid. It localises to the chloroplast inner membrane. The catalysed reaction is K(+)(in) + H(+)(out) = K(+)(out) + H(+)(in). Contributes to K(+)/H(+) antiport activity by supporting proton efflux to control proton extrusion and homeostasis in chloroplasts in a light-dependent manner to modulate photosynthesis. Prevents excessive induction of non-photochemical quenching (NPQ) under continuous-light conditions. Indirectly promotes efficient inorganic carbon uptake into chloroplasts. This is Potassium/proton antiporter CemA from Nicotiana sylvestris (Wood tobacco).